We begin with the raw amino-acid sequence, 119 residues long: Ribosome-binding factor A (119 aa).

The protein belongs to the RbfA family. In terms of assembly, monomer. Binds 30S ribosomal subunits, but not 50S ribosomal subunits or 70S ribosomes.

The protein localises to the cytoplasm. In terms of biological role, one of several proteins that assist in the late maturation steps of the functional core of the 30S ribosomal subunit. Associates with free 30S ribosomal subunits (but not with 30S subunits that are part of 70S ribosomes or polysomes). Required for efficient processing of 16S rRNA. May interact with the 5'-terminal helix region of 16S rRNA. The chain is Ribosome-binding factor A from Lactococcus lactis subsp. cremoris (strain SK11).